The sequence spans 726 residues: ORC ubiquitin ligase 1 (726 aa).

The RING-type; degenerate zinc finger occupies C18 to R56. Coiled-coil stretches lie at residues L87–D129 and E155–I270. S210 is subject to Phosphoserine. The segment at A274–E335 is disordered. Over residues K280–A290 the composition is skewed to basic and acidic residues. A compositionally biased stretch (low complexity) spans K300–L320. A compositionally biased stretch (polar residues) spans C321–A334. Residues S526, S553, S561, S568, S570, S719, and S721 each carry the phosphoserine modification. Residues Q687–S726 are disordered. The segment covering N702 to S726 has biased composition (polar residues).

Associates with ORC complex. Binds to chromatin; association is cell cycle-regulated, absent from mitotic chromosomes, is associated with chromatin from G1 and partially released from chromatin from mid S-phase. Auto-ubiquitinated.

It is found in the chromosome. The enzyme catalyses S-ubiquitinyl-[E2 ubiquitin-conjugating enzyme]-L-cysteine + [acceptor protein]-L-lysine = [E2 ubiquitin-conjugating enzyme]-L-cysteine + N(6)-ubiquitinyl-[acceptor protein]-L-lysine.. Functionally, E3 ubiquitin ligase essential for DNA replication origin activation during S phase. Acts as a replication origin selector which selects the origins to be fired and catalyzes the multi-mono-ubiquitination of a subset of chromatin-bound ORC3 and ORC5 during S-phase. The polypeptide is ORC ubiquitin ligase 1 (OBI1) (Pongo abelii (Sumatran orangutan)).